We begin with the raw amino-acid sequence, 766 residues long: Probable beta-glucosidase K (766 aa).

Asparagine 19 is a glycosylation site (N-linked (GlcNAc...) asparagine). Residue aspartate 196 is part of the active site. N-linked (GlcNAc...) asparagine glycans are attached at residues asparagine 288, asparagine 453, and asparagine 748. Residues 369-528 (EGQPGLGMRF…DPERAIARAV (160 aa)) enclose the PA14 domain. Residues 726–766 (LGRRGRSGSSPAVYRGRSNNVVNRTSHQGAQRISKGGFAAR) form a disordered region. Positions 742-756 (RSNNVVNRTSHQGAQ) are enriched in polar residues.

Belongs to the glycosyl hydrolase 3 family.

The protein localises to the secreted. It carries out the reaction Hydrolysis of terminal, non-reducing beta-D-glucosyl residues with release of beta-D-glucose.. The protein operates within glycan metabolism; cellulose degradation. Beta-glucosidases are one of a number of cellulolytic enzymes involved in the degradation of cellulosic biomass. Catalyzes the last step releasing glucose from the inhibitory cellobiose. The chain is Probable beta-glucosidase K (bglK) from Aspergillus fumigatus (strain CBS 144.89 / FGSC A1163 / CEA10) (Neosartorya fumigata).